Consider the following 258-residue polypeptide: Ferredoxin--NADP reductase (258 aa).

The FAD-binding FR-type domain maps to 2 to 102; the sequence is SNLYTERVLS…RKPTGTLVHD (101 aa). 9 residues coordinate FAD: Arg-51, Ala-52, Tyr-53, Ser-54, Phe-67, Ile-69, Leu-76, Thr-77, and Thr-117. Residues Val-144, Arg-145, Thr-181, Arg-182, Arg-190, Ser-223, Glu-227, Phe-255, and Glu-257 each contribute to the NADP(+) site. Phe-255, Glu-257, and Lys-258 together coordinate FAD.

It belongs to the ferredoxin--NADP reductase type 1 family. In terms of assembly, monomer. FAD serves as cofactor.

It carries out the reaction 2 reduced [2Fe-2S]-[ferredoxin] + NADP(+) + H(+) = 2 oxidized [2Fe-2S]-[ferredoxin] + NADPH. Transports electrons between ferredoxin and NADPH. Provides electrons to heme oxygenase (pigA) allowing anaerobic heme degradation. Provides electrons necessary to reduce and mobilize Fe(3+) in a heterooligomeric bacterioferritin (BFR) complex to Fe(2+). Reduction of Fe(3+) in a pure FtnA BFR does not require Bfd. Reduction of Fe(3+) in a pure BfrB BFR does require Bfd. This Pseudomonas aeruginosa (strain ATCC 15692 / DSM 22644 / CIP 104116 / JCM 14847 / LMG 12228 / 1C / PRS 101 / PAO1) protein is Ferredoxin--NADP reductase.